We begin with the raw amino-acid sequence, 153 residues long: MFKPHVTVACVVHAEGKFLVVEETINGKALWNQPAGHLEADETLVEAAARELWEETGISAQPQHFIRMHQWIAPDKTPFLRFLFAIELEQICPTQPHDSDIDCCRWVSAEEILKASNLRSPLVAESIRCYQSGQRYPLEMIGDFNWPFTKGVI.

One can recognise a Nudix hydrolase domain in the interval 3-131 (KPHVTVACVV…LVAESIRCYQ (129 aa)). The Nudix box signature appears at 36-57 (GHLEADETLVEAAARELWEETG).

The protein belongs to the Nudix hydrolase family. NudJ subfamily. In terms of assembly, monomer. Mg(2+) is required as a cofactor.

The sequence is that of Phosphatase NudJ (nudJ) from Shigella boydii serotype 4 (strain Sb227).